Reading from the N-terminus, the 245-residue chain is uncharacterized protein (245 aa).

This is an uncharacterized protein from Mycobacterium tuberculosis (strain CDC 1551 / Oshkosh).